We begin with the raw amino-acid sequence, 221 residues long: Protein RER1D (221 aa).

4 helical membrane-spanning segments follow: residues 41–58 (IVRRWLVTLVAAVIYIYR), 64–84 (GYFVISYGLATYILNLLIGFL), 128–148 (FVVAFVMTFFSFLDVPVFWPI), and 149–169 (LLCYWLVLYSLTMKRLIVHMF). Positions 200-221 (KGDGGDDRPSSSNSSQGNEKQD) are disordered. The span at 209-221 (SSSNSSQGNEKQD) shows a compositional bias: polar residues.

The protein belongs to the RER1 family.

The protein resides in the membrane. Its function is as follows. Involved in the retrieval of endoplasmic reticulum membrane proteins from the early Golgi compartment. This chain is Protein RER1D, found in Arabidopsis thaliana (Mouse-ear cress).